A 409-amino-acid chain; its full sequence is Nucleoprotein (409 aa).

4 disordered regions span residues 1 to 32 (MASG…SSGN), 44 to 63 (LNSP…ENLK), 120 to 145 (GADT…LRFS), and 164 to 193 (RSGR…SGAE). Residues 15–31 (PVIKLGGPKPPKVGSSG) are compositionally biased toward low complexity. An RNA-binding region spans residues 29–160 (SSGNASWFQA…GNFRWDFIPI (132 aa)). The region spanning 31–156 (GNASWFQALK…GGPDGNFRWD (126 aa)) is the CoV N NTD domain. Residues 164 to 179 (RSGRSTAASSAASSRA) show a composition bias toward low complexity. Over residues 180 to 192 (PSRDGSRGRRSGA) the composition is skewed to basic and acidic residues. Residue serine 190 is modified to Phosphoserine; by host. The 117-residue stretch at 215–331 (TKAKADEMAH…QCVDGVGTRP (117 aa)) folds into the CoV N CTD domain. The dimerization stretch occupies residues 226–333 (RYCKRTIPPG…VDGVGTRPKD (108 aa)). A disulfide bridge links cysteine 320 with cysteine 323. The disordered stretch occupies residues 327–409 (VGTRPKDDEP…GESALGENEL (83 aa)). A compositionally biased stretch (polar residues) spans 341 to 355 (RPNSRPATRTSSPAP). The span at 368–384 (KQDDEVDKALTSDEERN) shows a compositional bias: basic and acidic residues. Threonine 378 is modified (phosphothreonine; by host). Serine 379 is modified (phosphoserine; by host).

This sequence belongs to the gammacoronavirus nucleocapsid protein family. Homooligomer. Both monomeric and oligomeric forms interact with RNA. Interacts with protein M. Interacts with NSP3; this interaction serves to tether the genome to the newly translated replicase-transcriptase complex at a very early stage of infection. ADP-ribosylated. The ADP-ribosylation is retained in the virion during infection. Post-translationally, phosphorylated on serine and threonine residues.

The protein resides in the virion. It is found in the host endoplasmic reticulum-Golgi intermediate compartment. The protein localises to the host Golgi apparatus. Functionally, packages the positive strand viral genome RNA into a helical ribonucleocapsid (RNP) and plays a fundamental role during virion assembly through its interactions with the viral genome and membrane protein M. Plays an important role in enhancing the efficiency of subgenomic viral RNA transcription as well as viral replication. This chain is Nucleoprotein, found in Avian infectious bronchitis virus (strain D1466) (IBV).